Reading from the N-terminus, the 284-residue chain is Tropomyosin (284 aa).

A coiled-coil region spans residues 1–284; sequence MEAIKNKMQA…DQTFAELTGY (284 aa). The interval 22-43 is disordered; that stretch reads AEIAEQKSRDANLRAEKSEEEV.

Belongs to the tropomyosin family. As to quaternary structure, homodimer.

In terms of biological role, tropomyosin, in association with the troponin complex, plays a central role in the calcium dependent regulation of muscle contraction. The protein is Tropomyosin of Lepidoglyphus destructor (Storage mite).